The chain runs to 251 residues: tRNA (guanine-N(1)-)-methyltransferase (251 aa).

S-adenosyl-L-methionine contacts are provided by residues Gly-117 and Ile-137–Leu-142.

The protein belongs to the RNA methyltransferase TrmD family. Homodimer.

It localises to the cytoplasm. The enzyme catalyses guanosine(37) in tRNA + S-adenosyl-L-methionine = N(1)-methylguanosine(37) in tRNA + S-adenosyl-L-homocysteine + H(+). Its function is as follows. Specifically methylates guanosine-37 in various tRNAs. This chain is tRNA (guanine-N(1)-)-methyltransferase, found in Haemophilus ducreyi (strain 35000HP / ATCC 700724).